Consider the following 706-residue polypeptide: Fatty acid oxidation complex subunit alpha (706 aa).

The enoyl-CoA hydratase stretch occupies residues 1-188 (MEKTFSLSRR…KMGLVDDVVP (188 aa)). A 3-hydroxyacyl-CoA dehydrogenase region spans residues 308 to 706 (RKVAKAVVLG…AMAAEGKTFY (399 aa)).

It in the N-terminal section; belongs to the enoyl-CoA hydratase/isomerase family. In the central section; belongs to the 3-hydroxyacyl-CoA dehydrogenase family. Heterotetramer of two alpha chains (FadJ) and two beta chains (FadI).

The protein resides in the cytoplasm. The enzyme catalyses a (3S)-3-hydroxyacyl-CoA = a (2E)-enoyl-CoA + H2O. It catalyses the reaction a 4-saturated-(3S)-3-hydroxyacyl-CoA = a (3E)-enoyl-CoA + H2O. The catalysed reaction is a (3S)-3-hydroxyacyl-CoA + NAD(+) = a 3-oxoacyl-CoA + NADH + H(+). It carries out the reaction (3S)-3-hydroxybutanoyl-CoA = (3R)-3-hydroxybutanoyl-CoA. Its pathway is lipid metabolism; fatty acid beta-oxidation. Its function is as follows. Catalyzes the formation of a hydroxyacyl-CoA by addition of water on enoyl-CoA. Also exhibits 3-hydroxyacyl-CoA epimerase and 3-hydroxyacyl-CoA dehydrogenase activities. In Shewanella amazonensis (strain ATCC BAA-1098 / SB2B), this protein is Fatty acid oxidation complex subunit alpha.